A 240-amino-acid polypeptide reads, in one-letter code: Penton protein H240R (240 aa).

This sequence belongs to the asfivirus H240R family.

The protein resides in the virion. Functionally, forms the penton at the fivefold vertices of the icosahedral capsid. Together with the minor capsid proteins (p17, p49, and M1249L), forms a complicated network immediately below the outer capsid shell, stabilizing the whole capsid. The polypeptide is Penton protein H240R (African swine fever virus (isolate Tick/South Africa/Pretoriuskop Pr4/1996) (ASFV)).